The sequence spans 603 residues: DNA mismatch repair protein MutL (603 aa).

This sequence belongs to the DNA mismatch repair MutL/HexB family.

In terms of biological role, this protein is involved in the repair of mismatches in DNA. It is required for dam-dependent methyl-directed DNA mismatch repair. May act as a 'molecular matchmaker', a protein that promotes the formation of a stable complex between two or more DNA-binding proteins in an ATP-dependent manner without itself being part of a final effector complex. This is DNA mismatch repair protein MutL from Listeria monocytogenes serotype 4a (strain HCC23).